The following is a 125-amino-acid chain: Protein MGF 110-7L (125 aa).

The N-terminal stretch at 1 to 20 is a signal peptide; sequence MLVIILGVIGLLASSNLVSS. Asn-69, Asn-70, and Asn-105 each carry an N-linked (GlcNAc...) asparagine; by host glycan.

The protein belongs to the asfivirus MGF 110 family.

Functionally, plays a role in virus cell tropism, and may be required for efficient virus replication in macrophages. The sequence is that of Protein MGF 110-7L from Ornithodoros (relapsing fever ticks).